The following is a 406-amino-acid chain: Probable tRNA pseudouridine synthase D (406 aa).

Asp77 acts as the Nucleophile in catalysis. A TRUD domain is found at 150–371 (GFPNYFGIQR…PGGRRELLIK (222 aa)).

It belongs to the pseudouridine synthase TruD family.

The enzyme catalyses uridine(13) in tRNA = pseudouridine(13) in tRNA. Functionally, could be responsible for synthesis of pseudouridine from uracil-13 in transfer RNAs. The protein is Probable tRNA pseudouridine synthase D of Pyrococcus abyssi (strain GE5 / Orsay).